The sequence spans 2104 residues: Replication polyprotein (2104 aa).

A run of 2 helical transmembrane segments spans residues 23 to 43 (LVAS…FASS) and 70 to 90 (FNPF…YAFI). Positions 289–313 (VRVGEIREKVATLRNKLNTLQTKEL) form a coiled coil. An SF3 helicase domain is found at 329 to 501 (LEVLLIEVKV…NKMPKRGAID (173 aa)). Residues 1499-1520 (GDCGSPIVLASGKKAGKLIGFH) form a viral peptidase region. Positions 1838–1965 (PNYFDADYKN…SVSDEYKDKY (128 aa)) constitute a RdRp catalytic domain.

Post-translationally, specific enzymatic cleavages in vivo yield mature proteins.

Its subcellular location is the membrane. It catalyses the reaction RNA(n) + a ribonucleoside 5'-triphosphate = RNA(n+1) + diphosphate. The peptidase activity is involved in polyprotein maturation, possibly along with hosts proteases. Transmembrane protein may be surface viral glycoprotein. RNA-directed RNA polymerase replicates the viral genome. In Drosophila melanogaster (Fruit fly), this protein is Replication polyprotein.